Reading from the N-terminus, the 368-residue chain is MSAPEKPRERSFPKIEFTDSEAGAKEFPSSKSRSYSYFTPAKLRATMYEDVTVDVQPDPDRHLTQGWIYGFGNGPGGYPKDWTTAKSSDWHAFRDPNEEWNQTIYRNNAAVVRQVELCLKNAKRARVYDGWNSTWLTFIERNVGAWMHAENGLALHVFTSIQRSGPTNMINTAVAVNAAHKMRFAQDLALFNLDLAEATEAFDGSAHRAVWQEAREWQATRKVVEELTAVGDWCQLLFATNIVFEQLVGSLFRTELIMQIAARNGDYITPTIVGTGEHDYDRDLNYTRNLFRLLTRDPEHGEANKALFTEWLGIWVPRCLDAALALQPIWSAPADKAVTFASSLDAAKAKFTALLEEIDLDIPEELNK.

The segment covering 1 to 17 (MSAPEKPRERSFPKIEF) has biased composition (basic and acidic residues). Residues 1 to 32 (MSAPEKPRERSFPKIEFTDSEAGAKEFPSSKS) are disordered.

The protein belongs to the TmoE/XamoE family. As to quaternary structure, the propane 2-monooxygenase multicomponent enzyme system is composed of an electron transfer component and a monooxygenase component interacting with the effector protein MimD. The electron transfer component is composed of a reductase (MimB), and the monooxygenase component is formed by a large subunit (MimA) and a small subunit (MimC). Requires the presence of the chaperonin-like protein MimG to ensure a productive folding, resulting of a soluble MimC, which leads to the active form of MimABCD.

The enzyme catalyses propane + NADH + O2 + H(+) = propan-2-ol + NAD(+) + H2O. It carries out the reaction acetone + NADH + O2 + H(+) = hydroxyacetone + NAD(+) + H2O. The catalysed reaction is butan-2-one + NADH + O2 + H(+) = 1-hydroxy-2-butanone + NAD(+) + H2O. It catalyses the reaction phenol + NADH + O2 + H(+) = hydroquinone + NAD(+) + H2O. Functionally, component of the propane 2-monooxygenase multicomponent enzyme system which is involved in the degradation of propane via the O2-dependent hydroxylation of propane. Also involved in the degradation of acetone via the O2-dependent hydroxylation of acetone. Also able to catalyze the oxidation of phenol, methylethylketone (2-butanone), 1-propanol and 2-propanol. The chain is Propane 2-monooxygenase, hydroxylase component small subunit from Mycolicibacterium smegmatis (strain ATCC 700084 / mc(2)155) (Mycobacterium smegmatis).